The following is a 1481-amino-acid chain: Cystic fibrosis transmembrane conductance regulator (1481 aa).

The Cytoplasmic portion of the chain corresponds to 1–77 (MQRSPLEKAS…KLINALRRCF (77 aa)). The helical transmembrane segment at 78 to 98 (FWRFMFYGIILYLGEVTKAVQ) threads the bilayer. In terms of domain architecture, ABC transmembrane type-1 1 spans 81–365 (FMFYGIILYL…WAVQTWYDSL (285 aa)). Residues 99-122 (PLLLGRIIASYDPDNKAERSIAIY) are Extracellular-facing. Residues 123–146 (LGIGLCLLFIVRTLLLHPAIFGLH) form a helical membrane-spanning segment. Residues 147–195 (HIGMQMRIAMFSLIYKKTLKLSSRVLDKISIGQLVSLLSNNLNKFDEGL) are Cytoplasmic-facing. The helical transmembrane segment at 196-216 (ALAHFVWIAPLQVTLLMGLLW) threads the bilayer. The Extracellular segment spans residues 217–222 (ELLQAF). The helical transmembrane segment at 223–243 (TFCGLAFLVVLAFLQAGLGKM) threads the bilayer. The Cytoplasmic portion of the chain corresponds to 244–298 (MMKYRDQRAGKINERLVITSEIIENIQSVKAYCWEEAMEKIIENLRQTELKLTRK). A helical membrane pass occupies residues 299-319 (AAYVRYLNSSAFFFSGFFVVF). The Extracellular segment spans residues 320-339 (LSVLPYALLKGIILRKIFTT). The chain crosses the membrane as a helical span at residues 340 to 358 (ISFCIVLRMAVTRQFPWAV). Over 359–858 (QTWYDSLGAI…YLRYITVHKS (500 aa)) the chain is Cytoplasmic. ATP is bound by residues Trp401, 457–464 (GSTGAGKT), and Gln492. Residues 423–645 (NGDNNLFFSN…RPDFSSKLMG (223 aa)) enclose the ABC transporter 1 domain. Cys523 is lipidated: S-palmitoyl cysteine. A phosphoserine mark is found at Ser548 and Ser659. Residues 653–831 (TAERRNSIIT…EEINEEDLRD (179 aa)) are disordered R region. Ser669 is modified (phosphoserine; by PKA). Ser685 carries the post-translational modification Phosphoserine. A Glycyl lysine isopeptide (Lys-Gly) (interchain with G-Cter in ubiquitin) cross-link involves residue Lys687. Phosphoserine is present on residues Ser699 and Ser711. Phosphothreonine is present on Thr716. 5 positions are modified to phosphoserine: Ser736, Ser767, Ser790, Ser795, and Ser813. Residues 859 to 879 (LMFVLIWCLVVFLAEVAASLV) traverse the membrane as a helical segment. Residues 859 to 1155 (LMFVLIWCLV…AVNSSIDVDS (297 aa)) enclose the ABC transmembrane type-1 2 domain. The Extracellular portion of the chain corresponds to 880–918 (VLCLFPKILFQDKGNSTKSANNSYAVIITSTSSYYIFYI). 2 N-linked (GlcNAc...) asparagine glycosylation sites follow: Asn894 and Asn900. A discontinuously helical membrane pass occupies residues 919–939 (YVGVADTLLALGLFRGLPLVH). The Cytoplasmic portion of the chain corresponds to 940 to 990 (TLITVSKTLHHKMLQSVLQAPMSTLNTLKTGGILNRFSKDIAVLDDLLPLT). Residues 991 to 1011 (IFDFVQLLLIVIGAVVVVSVL) traverse the membrane as a helical segment. The Extracellular portion of the chain corresponds to 1012–1013 (QP). Residues 1014–1034 (YIFLATVPVIAAFILLRAYFL) traverse the membrane as a helical segment. Over 1035-1095 (HTSQQLKQLE…TANWFLYLST (61 aa)) the chain is Cytoplasmic. Residues 1096–1116 (LRWFQMRIEMIFVIFFIAVTF) form a helical membrane-spanning segment. Residues 1117-1130 (ISILTTGEGEGRVG) lie on the Extracellular side of the membrane. A helical membrane pass occupies residues 1131–1151 (IILTLAMNIMGTLQWAVNSSI). Over 1152-1481 (DVDSLMRSVS…TEEEVQETKI (330 aa)) the chain is Cytoplasmic. Residues 1211–1444 (MTVKDLTAKY…KSLFRQAISP (234 aa)) form the ABC transporter 2 domain. ATP contacts are provided by residues Tyr1220 and 1245 to 1252 (GRTGSGKS). The interval 1387–1481 (RTLKQAFADC…TEEEVQETKI (95 aa)) is interaction with GORASP2. Cys1396 carries the S-palmitoyl cysteine lipid modification. Residues 1452-1481 (PQRNSSRQKSRSNIAALKEETEEEVQETKI) form a disordered region. A compositionally biased stretch (low complexity) spans 1453 to 1464 (QRNSSRQKSRSN). Ser1457 bears the Phosphoserine mark. Residues 1471 to 1481 (ETEEEVQETKI) show a composition bias toward acidic residues. The PDZ-binding signature appears at 1479–1481 (TKI).

This sequence belongs to the ABC transporter superfamily. ABCC family. CFTR transporter (TC 3.A.1.202) subfamily. In terms of assembly, monomer; does not require oligomerization for channel activity. May form oligomers in the membrane. Interacts with SLC26A3, SLC26A6 and NHERF1. Interacts with SHANK2. Interacts with MYO6. Interacts (via C-terminus) with GOPC (via PDZ domain); this promotes CFTR internalization and thereby decreases channel activity. Interacts with SLC4A7 through NHERF1. Found in a complex with MYO5B and RAB11A. Interacts with ANO1. Interacts with SLC26A8. Interacts with AHCYL1; the interaction increases CFTR activity. Interacts with CSE1L. The core-glycosylated form interacts with GORASP2 (via PDZ GRASP-type 1 domain) in respone to ER stress. Interacts with MARCHF2; the interaction leads to CFTR ubiqtuitination and degradation. Interacts with ADGRG2. N-glycosylated. Post-translationally, phosphorylated; cAMP treatment promotes phosphorylation and activates the channel. Dephosphorylation decreases the ATPase activity (in vitro). Phosphorylation at PKA sites activates the channel. Phosphorylation at PKC sites enhances the response to phosphorylation by PKA. Phosphorylated by AMPK; this inhibits channel activity. In terms of processing, ubiquitinated, leading to its degradation in the lysosome. Deubiquitination by USP10 in early endosomes enhances its endocytic recycling to the cell membrane. Ubiquitinated by RNF185 during ER stress. Ubiquitinated by MARCHF2.

It is found in the apical cell membrane. The protein localises to the early endosome membrane. It localises to the cell membrane. The protein resides in the recycling endosome membrane. Its subcellular location is the endoplasmic reticulum membrane. It is found in the nucleus. It catalyses the reaction ATP + H2O + closed Cl(-) channel = ADP + phosphate + open Cl(-) channel.. It carries out the reaction chloride(in) = chloride(out). The catalysed reaction is hydrogencarbonate(in) = hydrogencarbonate(out). The enzyme catalyses ATP + H2O = ADP + phosphate + H(+). Its function is as follows. Epithelial ion channel that plays an important role in the regulation of epithelial ion and water transport and fluid homeostasis. Mediates the transport of chloride ions across the cell membrane. Possesses an intrinsic ATPase activity and utilizes ATP to gate its channel; the passive flow of anions through the channel is gated by cycles of ATP binding and hydrolysis by the ATP-binding domains. The ion channel is also permeable to HCO(3)(-); selectivity depends on the extracellular chloride concentration. Exerts its function also by modulating the activity of other ion channels and transporters. Contributes to the regulation of the pH and the ion content of the epithelial fluid layer. Modulates the activity of the epithelial sodium channel (ENaC) complex, in part by regulating the cell surface expression of the ENaC complex. May regulate bicarbonate secretion and salvage in epithelial cells by regulating the transporter SLC4A7. Can inhibit the chloride channel activity of ANO1. Plays a role in the chloride and bicarbonate homeostasis during sperm epididymal maturation and capacitation. The sequence is that of Cystic fibrosis transmembrane conductance regulator from Muntiacus reevesi (Reeves' muntjac).